An 876-amino-acid polypeptide reads, in one-letter code: GATOR2 complex protein MIOS (876 aa).

6 WD repeats span residues 59–101 (SDTP…NSKS), 112–156 (KHAR…SPEA), 182–222 (GQND…QKTF), 224–262 (NTKA…KPVF), 266–307 (EQPK…MPFG), and 400–440 (RAQS…KQYT). The C4-type zinc-finger motif lies at 738–784 (VSCNFCGKSISYSCSAMPHQGRGFSQYGVSGSPTKSKVTSCPGCRKP). Positions 740, 743, 778, 781, 791, 830, 833, 835, 838, 841, 852, 857, and 861 each coordinate Zn(2+). The segment at 785–866 (LPRCALCLMN…CTCKCMQLDT (82 aa)) adopts an RING-type; atypical zinc-finger fold.

The protein belongs to the WD repeat mio family. As to quaternary structure, component of the GATOR2 subcomplex, composed of MIOS, SEC13, SEH1L, WDR24 and WDR59. The GATOR2 complex interacts with CASTOR1 and CASTOR2; the interaction is negatively regulated by arginine. The GATOR2 complex interacts with SESN1, SESN2 and SESN3; the interaction is negatively regulated by amino acids. Interacts with SAR1; the interaction is direct, disrupted by leucine and mediates the interaction of SAR1 with the GATOR2 complex to negatively regulate the TORC1 signaling upon leucine deprivation.

The protein localises to the lysosome membrane. The GATOR2 complex is negatively regulated by the upstream amino acid sensors CASTOR1 and SESN2, which sequester the GATOR2 complex in absence of amino acids. In the presence of abundant amino acids, GATOR2 is released from CASTOR1 and SESN2 and activated. Its function is as follows. As a component of the GATOR2 complex, functions as an activator of the amino acid-sensing branch of the mTORC1 signaling pathway. The GATOR2 complex indirectly activates mTORC1 through the inhibition of the GATOR1 subcomplex. GATOR2 probably acts as an E3 ubiquitin-protein ligase toward GATOR1. In the presence of abundant amino acids, the GATOR2 complex mediates ubiquitination of the NPRL2 core component of the GATOR1 complex, leading to GATOR1 inactivation. In the absence of amino acids, GATOR2 is inhibited, activating the GATOR1 complex. Within the GATOR2 complex, MIOS is required to prevent autoubiquitination of WDR24, the catalytic subunit of the complex. In Danio rerio (Zebrafish), this protein is GATOR2 complex protein MIOS.